Here is a 92-residue protein sequence, read N- to C-terminus: Small ribosomal subunit protein uS19 (92 aa).

Belongs to the universal ribosomal protein uS19 family.

Protein S19 forms a complex with S13 that binds strongly to the 16S ribosomal RNA. The sequence is that of Small ribosomal subunit protein uS19 from Buchnera aphidicola subsp. Schizaphis graminum (strain Sg).